The following is a 311-amino-acid chain: Apolipoprotein E (311 aa).

The signal sequence occupies residues 1 to 18 (MKALWAVLLVTLLTGCLA). 8 consecutive repeat copies span residues 72 to 93 (ALME…EQLG), 94 to 115 (PVAE…ARLG), 116 to 137 (ADME…TMLG), 138 to 159 (QSTE…KRLM), 160 to 181 (RDAE…EGAE), 182 to 203 (RGVS…QRTA), 204 to 225 (NLGA…DRIR), and 226 to 247 (GRLE…EHME). The segment at 72–247 (ALMEDTMTEV…RLEEVREHME (176 aa)) is 8 X 22 AA approximate tandem repeats. Position 135 is a methionine sulfoxide (M135). A Phosphoserine modification is found at S139. The segment at 150 to 160 (HLRKMRKRLMR) is LDL and other lipoprotein receptors binding. 154 to 157 (MRKR) is a heparin binding site. The segment at 202–282 (TANLGAGAAQ…GWFEPIVEDM (81 aa)) is lipid-binding and lipoprotein association. 221-228 (GDRIRGRL) serves as a coordination point for heparin. Positions 258 to 311 (QQIRLQAEIFQARLKGWFEPIVEDMHRQWANLMEKIQASVATNPIITPVAQENQ) are homooligomerization. The interval 270 to 282 (RLKGWFEPIVEDM) is specificity for association with VLDL.

It belongs to the apolipoprotein A1/A4/E family. In terms of assembly, homotetramer. May interact with ABCA1; functionally associated with ABCA1 in the biogenesis of HDLs. May interact with APP/A4 amyloid-beta peptide; the interaction is extremely stable in vitro but its physiological significance is unclear. May interact with MAPT. May interact with MAP2. In the cerebrospinal fluid, interacts with secreted SORL1. Interacts with PMEL; this allows the loading of PMEL luminal fragment on ILVs to induce fibril nucleation. Post-translationally, APOE exists as multiple glycosylated and sialylated glycoforms within cells and in plasma. The extent of glycosylation and sialylation are tissue and context specific. Glycated in plasma VLDL. In terms of processing, phosphorylated by FAM20C in the extracellular medium.

The protein resides in the secreted. It localises to the extracellular space. The protein localises to the extracellular matrix. Its subcellular location is the extracellular vesicle. It is found in the endosome. The protein resides in the multivesicular body. Functionally, APOE is an apolipoprotein, a protein associating with lipid particles, that mainly functions in lipoprotein-mediated lipid transport between organs via the plasma and interstitial fluids. APOE is a core component of plasma lipoproteins and is involved in their production, conversion and clearance. Apolipoproteins are amphipathic molecules that interact both with lipids of the lipoprotein particle core and the aqueous environment of the plasma. As such, APOE associates with chylomicrons, chylomicron remnants, very low density lipoproteins (VLDL) and intermediate density lipoproteins (IDL) but shows a preferential binding to high-density lipoproteins (HDL). It also binds a wide range of cellular receptors including the LDL receptor/LDLR and the very low-density lipoprotein receptor/VLDLR that mediate the cellular uptake of the APOE-containing lipoprotein particles. Finally, APOE also has a heparin-binding activity and binds heparan-sulfate proteoglycans on the surface of cells, a property that supports the capture and the receptor-mediated uptake of APOE-containing lipoproteins by cells. This Mus musculus (Mouse) protein is Apolipoprotein E (Apoe).